The following is a 648-amino-acid chain: Activatory protein CHA4 (648 aa).

The span at 1-10 shows a compositional bias: pro residues; it reads MMLEPSPPPL. Positions 1 to 37 are disordered; the sequence is MMLEPSPPPLTTTVTPSLPSSLKKSVTDNDQNNNNVP. A compositionally biased stretch (low complexity) spans 11-22; it reads TTTVTPSLPSSL. Positions 44-70 form a DNA-binding region, zn(2)-C6 fungal-type; sequence CQNCRRRRRKCNMEKPCSNCIKFRTEC. The disordered stretch occupies residues 140–177; the sequence is AQSALPSSESNDENESDAFTKKMPSESPPPVGTNSIYP. Residues Ser164 and Ser166 each carry the phosphoserine modification.

The protein localises to the nucleus. Activates the CHA1 gene for L-serine dehydratase. Binds to the DNA sequence 5'-GVGGARAYRTRATTCCRC-3'. The chain is Activatory protein CHA4 (CHA4) from Saccharomyces cerevisiae (strain ATCC 204508 / S288c) (Baker's yeast).